We begin with the raw amino-acid sequence, 353 residues long: Methylthioribose-1-phosphate isomerase (353 aa).

Residues 51–53 (RGA), Arg-94, and Gln-203 each bind substrate. Asp-244 acts as the Proton donor in catalysis. 254–255 (NK) provides a ligand contact to substrate.

This sequence belongs to the eIF-2B alpha/beta/delta subunits family. MtnA subfamily.

The enzyme catalyses 5-(methylsulfanyl)-alpha-D-ribose 1-phosphate = 5-(methylsulfanyl)-D-ribulose 1-phosphate. It functions in the pathway amino-acid biosynthesis; L-methionine biosynthesis via salvage pathway; L-methionine from S-methyl-5-thio-alpha-D-ribose 1-phosphate: step 1/6. Functionally, catalyzes the interconversion of methylthioribose-1-phosphate (MTR-1-P) into methylthioribulose-1-phosphate (MTRu-1-P). This Trichodesmium erythraeum (strain IMS101) protein is Methylthioribose-1-phosphate isomerase.